We begin with the raw amino-acid sequence, 256 residues long: Kallikrein-15 (256 aa).

A signal peptide spans methionine 1–alanine 16. A propeptide spans glutamine 17–lysine 21 (activation peptide). Positions leucine 22–lysine 254 constitute a Peptidase S1 domain. A disulfide bond links cysteine 47 and cysteine 63. Catalysis depends on charge relay system residues histidine 62 and aspartate 106. Intrachain disulfides connect cysteine 138–cysteine 215, cysteine 180–cysteine 194, and cysteine 205–cysteine 230. An N-linked (GlcNAc...) asparagine glycan is attached at asparagine 171. Catalysis depends on serine 209, which acts as the Charge relay system. Asparagine 232 is a glycosylation site (N-linked (GlcNAc...) asparagine).

It belongs to the peptidase S1 family. Kallikrein subfamily. In terms of tissue distribution, highest expression in the thyroid gland. Also expressed in the prostate, salivary, and adrenal glands and in the colon testis and kidney.

The protein resides in the secreted. Functionally, protease whose physiological substrate is not yet known. The protein is Kallikrein-15 (KLK15) of Homo sapiens (Human).